An 878-amino-acid polypeptide reads, in one-letter code: Phosphoenolpyruvate carboxylase (878 aa).

Active-site residues include H137 and K545.

It belongs to the PEPCase type 1 family. Mg(2+) serves as cofactor.

The catalysed reaction is oxaloacetate + phosphate = phosphoenolpyruvate + hydrogencarbonate. In terms of biological role, forms oxaloacetate, a four-carbon dicarboxylic acid source for the tricarboxylic acid cycle. The sequence is that of Phosphoenolpyruvate carboxylase from Yersinia pseudotuberculosis serotype O:1b (strain IP 31758).